The primary structure comprises 208 residues: uncharacterized protein (208 aa).

This is an uncharacterized protein from Synechococcus elongatus (strain ATCC 33912 / PCC 7942 / FACHB-805) (Anacystis nidulans R2).